Reading from the N-terminus, the 197-residue chain is Cerebellin-3 (197 aa).

A signal peptide spans 1–24 (MGTEWHKPKLSLALVLLTLEAGWA). The C1q domain occupies 59 to 197 (APPGRVAFAA…SFSGFLIFPL (139 aa)). A necessary for interaction with CBLN3, and homotrimerization region spans residues 64–197 (VAFAAVRSHH…SFSGFLIFPL (134 aa)). N-linked (GlcNAc...) asparagine glycosylation is present at N82.

Heterohexamer; disulfide-linked heterotrimers. Interacts with CBLN1. May also form oligomers with CBLN2 and CBLN4. As to expression, expressed in brain, restricted to the cerebellar cortex. Within the cerebellum, expressed in granule layers (at protein level). Also detected in postsynaptic Purkinje cell spines (at protein level).

The protein resides in the endoplasmic reticulum. It localises to the golgi apparatus. It is found in the cis-Golgi network. Its subcellular location is the secreted. The protein localises to the synapse. May be involved in synaptic functions in the CNS. The chain is Cerebellin-3 (Cbln3) from Mus musculus (Mouse).